We begin with the raw amino-acid sequence, 454 residues long: UDP-N-acetylmuramoylalanine--D-glutamate ligase (454 aa).

ATP is bound at residue 116 to 122 (GTNGKTS).

It belongs to the MurCDEF family.

It is found in the cytoplasm. It catalyses the reaction UDP-N-acetyl-alpha-D-muramoyl-L-alanine + D-glutamate + ATP = UDP-N-acetyl-alpha-D-muramoyl-L-alanyl-D-glutamate + ADP + phosphate + H(+). It functions in the pathway cell wall biogenesis; peptidoglycan biosynthesis. Functionally, cell wall formation. Catalyzes the addition of glutamate to the nucleotide precursor UDP-N-acetylmuramoyl-L-alanine (UMA). This chain is UDP-N-acetylmuramoylalanine--D-glutamate ligase, found in Lachnoclostridium phytofermentans (strain ATCC 700394 / DSM 18823 / ISDg) (Clostridium phytofermentans).